Here is a 972-residue protein sequence, read N- to C-terminus: Fibroblast growth factor receptor (972 aa).

Positions 1 to 43 (MSLPRCPRTRTVMFSRTLTRCYPQRTLWIAILCVICSWTLSTA) are cleaved as a signal peptide. The Extracellular segment spans residues 44 to 547 (GATTIRDKEV…NNMQPTSKTQ (504 aa)). The Fibronectin type-III domain occupies 57 to 152 (APQDLTAIPV…YIEASGTPPI (96 aa)). N-linked (GlcNAc...) asparagine glycans are attached at residues Asn109, Asn121, Asn191, Asn203, Asn239, Asn272, Asn315, Asn390, Asn398, Asn419, Asn422, and Asn460. The 93-residue stretch at 150-242 (PPIPPTLRRN…GQPIHVNFTL (93 aa)) folds into the Ig-like C2-type 1 domain. The cysteines at positions 176 and 226 are disulfide-linked. Ig-like C2-type domains lie at 282 to 374 (PRFT…YDVK) and 383 to 517 (PIMS…AYLD). Cys306 and Cys358 are joined by a disulfide. Cys403 and Cys501 are disulfide-bonded. Residues 548 to 568 (LIIFSVVGFVVVLILVTCIAI) form a helical membrane-spanning segment. At 569–972 (LCKQTQVRHR…QTRDCCPYAN (404 aa)) the chain is on the cytoplasmic side. The 287-residue stretch at 639–925 (LTVGKTIGEG…ISVSSNQDYL (287 aa)) folds into the Protein kinase domain. ATP is bound by residues 645-653 (IGEGAFGKV) and Lys673. The active-site Proton acceptor is the Asp781. Position 812 is a phosphotyrosine; by autocatalysis (Tyr812).

This sequence belongs to the protein kinase superfamily. Tyr protein kinase family. Fibroblast growth factor receptor subfamily.

It localises to the membrane. It carries out the reaction L-tyrosyl-[protein] + ATP = O-phospho-L-tyrosyl-[protein] + ADP + H(+). In terms of biological role, receptor for basic fibroblast growth factor. The chain is Fibroblast growth factor receptor (FGFR) from Strongylocentrotus purpuratus (Purple sea urchin).